The following is a 227-amino-acid chain: N-(5'-phosphoribosyl)anthranilate isomerase (227 aa).

Belongs to the TrpF family.

The catalysed reaction is N-(5-phospho-beta-D-ribosyl)anthranilate = 1-(2-carboxyphenylamino)-1-deoxy-D-ribulose 5-phosphate. Its pathway is amino-acid biosynthesis; L-tryptophan biosynthesis; L-tryptophan from chorismate: step 3/5. In Herminiimonas arsenicoxydans, this protein is N-(5'-phosphoribosyl)anthranilate isomerase.